The chain runs to 508 residues: Glycerol kinase (508 aa).

Position 17 (threonine 17) interacts with ADP. Residues threonine 17, threonine 18, and serine 19 each coordinate ATP. A sn-glycerol 3-phosphate-binding site is contributed by threonine 17. An ADP-binding site is contributed by arginine 21. Sn-glycerol 3-phosphate is bound by residues arginine 87, glutamate 88, tyrosine 139, and aspartate 256. Glycerol-binding residues include arginine 87, glutamate 88, tyrosine 139, aspartate 256, and glutamine 257. Residues threonine 278 and glycine 322 each coordinate ADP. Threonine 278, glycine 322, glutamine 326, and alanine 423 together coordinate ATP. Residues alanine 423 and asparagine 427 each coordinate ADP.

Belongs to the FGGY kinase family.

The catalysed reaction is glycerol + ATP = sn-glycerol 3-phosphate + ADP + H(+). Its pathway is polyol metabolism; glycerol degradation via glycerol kinase pathway; sn-glycerol 3-phosphate from glycerol: step 1/1. Its activity is regulated as follows. Inhibited by fructose 1,6-bisphosphate (FBP). Key enzyme in the regulation of glycerol uptake and metabolism. Catalyzes the phosphorylation of glycerol to yield sn-glycerol 3-phosphate. The protein is Glycerol kinase of Corynebacterium efficiens (strain DSM 44549 / YS-314 / AJ 12310 / JCM 11189 / NBRC 100395).